Reading from the N-terminus, the 293-residue chain is Bifunctional protein FolD (293 aa).

NADP(+)-binding positions include Gly-165–Gly-167, Thr-192, and Val-233.

Belongs to the tetrahydrofolate dehydrogenase/cyclohydrolase family. In terms of assembly, homodimer.

It carries out the reaction (6R)-5,10-methylene-5,6,7,8-tetrahydrofolate + NADP(+) = (6R)-5,10-methenyltetrahydrofolate + NADPH. The enzyme catalyses (6R)-5,10-methenyltetrahydrofolate + H2O = (6R)-10-formyltetrahydrofolate + H(+). It functions in the pathway one-carbon metabolism; tetrahydrofolate interconversion. Functionally, catalyzes the oxidation of 5,10-methylenetetrahydrofolate to 5,10-methenyltetrahydrofolate and then the hydrolysis of 5,10-methenyltetrahydrofolate to 10-formyltetrahydrofolate. This Streptomyces griseus subsp. griseus (strain JCM 4626 / CBS 651.72 / NBRC 13350 / KCC S-0626 / ISP 5235) protein is Bifunctional protein FolD.